A 674-amino-acid polypeptide reads, in one-letter code: Pentatricopeptide repeat-containing protein At4g17616 (674 aa).

5 PPR repeats span residues 409–443, 444–478, 519–553, 554–584, and 593–627; these read GSRLCADVIDACVAIGWLEAAHDILDDMNSAGYPM, ELATYRMVLSGYYKSKMLRNAEVLLKQMTKAGLIT, MLYELNSSLYYFCKAKMQGDALITYRKIPKMKIPP, TVQSFWILIDMYSSLGMYREITIVWGDIKRN, and TQDLLEKLVVNFLRGGYFERVMELISYMKENDMYN.

The protein belongs to the PPR family. P subfamily.

This is Pentatricopeptide repeat-containing protein At4g17616 from Arabidopsis thaliana (Mouse-ear cress).